The following is a 562-amino-acid chain: Oligo-1,6-glucosidase (562 aa).

Residues aspartate 21, asparagine 23, aspartate 25, and aspartate 29 each contribute to the Ca(2+) site. Catalysis depends on aspartate 199, which acts as the Nucleophile. Glutamate 256 (proton donor) is an active-site residue.

This sequence belongs to the glycosyl hydrolase 13 family.

The protein resides in the cytoplasm. It catalyses the reaction Hydrolysis of (1-&gt;6)-alpha-D-glucosidic linkages in some oligosaccharides produced from starch and glycogen by alpha-amylase, and in isomaltose.. This Parageobacillus thermoglucosidasius (Geobacillus thermoglucosidasius) protein is Oligo-1,6-glucosidase (malL).